The sequence spans 38 residues: Photosystem II reaction center protein L (38 aa).

The helical transmembrane segment at 17 to 37 (SLYWGLLLIFVLAVLFSNYFF) threads the bilayer.

It belongs to the PsbL family. In terms of assembly, PSII is composed of 1 copy each of membrane proteins PsbA, PsbB, PsbC, PsbD, PsbE, PsbF, PsbH, PsbI, PsbJ, PsbK, PsbL, PsbM, PsbT, PsbX, PsbY, PsbZ, Psb30/Ycf12, at least 3 peripheral proteins of the oxygen-evolving complex and a large number of cofactors. It forms dimeric complexes.

It localises to the plastid. The protein resides in the chloroplast thylakoid membrane. Functionally, one of the components of the core complex of photosystem II (PSII). PSII is a light-driven water:plastoquinone oxidoreductase that uses light energy to abstract electrons from H(2)O, generating O(2) and a proton gradient subsequently used for ATP formation. It consists of a core antenna complex that captures photons, and an electron transfer chain that converts photonic excitation into a charge separation. This subunit is found at the monomer-monomer interface and is required for correct PSII assembly and/or dimerization. This is Photosystem II reaction center protein L from Huperzia lucidula (Shining clubmoss).